Reading from the N-terminus, the 155-residue chain is Ribosome maturation factor RimP (155 aa).

It belongs to the RimP family.

It is found in the cytoplasm. Required for maturation of 30S ribosomal subunits. The chain is Ribosome maturation factor RimP from Phocaeicola vulgatus (strain ATCC 8482 / DSM 1447 / JCM 5826 / CCUG 4940 / NBRC 14291 / NCTC 11154) (Bacteroides vulgatus).